A 229-amino-acid chain; its full sequence is Putative 3-methyladenine DNA glycosylase (229 aa).

Belongs to the DNA glycosylase MPG family.

This Enterococcus faecalis (strain ATCC 700802 / V583) protein is Putative 3-methyladenine DNA glycosylase.